A 521-amino-acid polypeptide reads, in one-letter code: Cytochrome b5 reductase 4 (521 aa).

Residue methionine 1 is modified to N-acetylmethionine. Residues 1–18 (MLNVPSQSFPAPRSQQRV) show a composition bias toward polar residues. Positions 1-27 (MLNVPSQSFPAPRSQQRVASGGRSKVP) are disordered. Positions 54 to 130 (LIEVTEEELK…LKECLVGRMA (77 aa)) constitute a Cytochrome b5 heme-binding domain. 2 residues coordinate heme: histidine 89 and histidine 112. A CS domain is found at 165 to 256 (PSYPSYDWFQ…KENTSWDFLG (92 aa)). The FAD-binding FR-type domain occupies 273-385 (LYYRKCQLIS…SSPEGNFKIS (113 aa)). FAD is bound by residues 365–380 (DRLQIGDFVSVSSPEG) and 392–424 (DLFLLAAGTGFTPMVKILNYALTDIPSLRKVKL).

It belongs to the flavoprotein pyridine nucleotide cytochrome reductase family. FAD serves as cofactor. In terms of tissue distribution, widely expressed.

Its subcellular location is the endoplasmic reticulum. It catalyses the reaction 2 Fe(III)-[cytochrome b5] + NADH = 2 Fe(II)-[cytochrome b5] + NAD(+) + H(+). NADH-cytochrome b5 reductase involved in endoplasmic reticulum stress response pathway. Plays a critical role in protecting pancreatic beta-cells against oxidant stress, possibly by protecting the cell from excess buildup of reactive oxygen species (ROS). Reduces a variety of substrates in vitro, such as cytochrome c, feericyanide and methemoglobin. This chain is Cytochrome b5 reductase 4, found in Homo sapiens (Human).